A 36-amino-acid polypeptide reads, in one-letter code: Photosystem I reaction center subunit VIII (36 aa).

The helical transmembrane segment at 6–28 threads the bilayer; sequence LPSIFVPLVGLLFPAIAMVSLFF.

The protein belongs to the PsaI family.

The protein localises to the plastid. It localises to the chloroplast thylakoid membrane. May help in the organization of the PsaL subunit. The sequence is that of Photosystem I reaction center subunit VIII from Nymphaea alba (White water-lily).